A 92-amino-acid polypeptide reads, in one-letter code: MENNTFSSKSINLLILLLLLCTFLCQTESALPSHQELVITGRRMMSYYKPNTDIGTPSSTSDRGGGGNGRRLMSQMDVGASSSGQGGGRNRH.

An N-terminal signal peptide occupies residues 1-29; sequence MENNTFSSKSINLLILLLLLCTFLCQTES. A disordered region spans residues 50-92; the sequence is PNTDIGTPSSTSDRGGGGNGRRLMSQMDVGASSSGQGGGRNRH. Residues 53–62 are compositionally biased toward polar residues; the sequence is DIGTPSSTSD. 2 consecutive short sequence motifs (SCOOP motif) follow at residues 53 to 67 and 75 to 89; these read DIGTPSSTSDRGGGG and QMDVGASSSGQGGGR. Short sequence motifs (sxS motif essential for MIK2 binding) lie at residues 59 to 61 and 81 to 83; these read STS and SSS.

The protein belongs to the serine rich endogenous peptide (SCOOP) phytocytokine family. In terms of assembly, interacts with MIK2 (via extracellular leucine-rich repeat domain); this interaction triggers the formation of complex between MIK2 and the BAK1/SERK3 and SERK4 coreceptors, and subsequent BAK1 activation by phosphorylation. Mostly expressed in seedlings shoots and roots, and, to a lower extent, in leaves.

The protein localises to the cell membrane. The protein resides in the secreted. Its subcellular location is the extracellular space. It localises to the apoplast. Brassicaceae-specific phytocytokine (plant endogenous peptide released into the apoplast) perceived by MIK2 in a BAK1/SERK3 and SERK4 coreceptors-dependent manner, that modulates various physiological and antimicrobial processes including growth prevention and reactive oxygen species (ROS) response regulation. This chain is Serine rich endogenous peptide 11, found in Arabidopsis thaliana (Mouse-ear cress).